Consider the following 374-residue polypeptide: Ribonuclease D (374 aa).

In terms of domain architecture, 3'-5' exonuclease spans 6-171 (IISTTEDLKK…RATRVILLSK (166 aa)). The 80-residue stretch at 213–292 (DRKSIGVAQE…ARALNKKEVD (80 aa)) folds into the HRDC domain.

This sequence belongs to the RNase D family. A divalent metal cation serves as cofactor.

Its subcellular location is the cytoplasm. It catalyses the reaction Exonucleolytic cleavage that removes extra residues from the 3'-terminus of tRNA to produce 5'-mononucleotides.. In terms of biological role, exonuclease involved in the 3' processing of various precursor tRNAs. Initiates hydrolysis at the 3'-terminus of an RNA molecule and releases 5'-mononucleotides. In Desulfotalea psychrophila (strain LSv54 / DSM 12343), this protein is Ribonuclease D.